The chain runs to 553 residues: CTP synthase (553 aa).

Residues 1–270 (MTKYVFVTGG…DRLICEELRL (270 aa)) form an amidoligase domain region. Ser13 contributes to the CTP binding site. Ser13 contributes to the UTP binding site. ATP-binding positions include 14–19 (SLGKGI) and Asp71. Mg(2+) contacts are provided by Asp71 and Glu144. CTP-binding positions include 151–153 (DIE), 191–196 (KTKPTQ), and Lys227. UTP contacts are provided by residues 191-196 (KTKPTQ) and Lys227. The region spanning 295-547 (TIGMVGKYVD…VQAALACQQT (253 aa)) is the Glutamine amidotransferase type-1 domain. Position 356 (Gly356) interacts with L-glutamine. Cys383 acts as the Nucleophile; for glutamine hydrolysis in catalysis. Residues 384-387 (LGMQ), Glu407, and Arg473 each bind L-glutamine. Active-site residues include His520 and Glu522.

This sequence belongs to the CTP synthase family. In terms of assembly, homotetramer.

The enzyme catalyses UTP + L-glutamine + ATP + H2O = CTP + L-glutamate + ADP + phosphate + 2 H(+). It catalyses the reaction L-glutamine + H2O = L-glutamate + NH4(+). The catalysed reaction is UTP + NH4(+) + ATP = CTP + ADP + phosphate + 2 H(+). It functions in the pathway pyrimidine metabolism; CTP biosynthesis via de novo pathway; CTP from UDP: step 2/2. Its activity is regulated as follows. Allosterically activated by GTP, when glutamine is the substrate; GTP has no effect on the reaction when ammonia is the substrate. The allosteric effector GTP functions by stabilizing the protein conformation that binds the tetrahedral intermediate(s) formed during glutamine hydrolysis. Inhibited by the product CTP, via allosteric rather than competitive inhibition. Its function is as follows. Catalyzes the ATP-dependent amination of UTP to CTP with either L-glutamine or ammonia as the source of nitrogen. Regulates intracellular CTP levels through interactions with the four ribonucleotide triphosphates. The polypeptide is CTP synthase (Burkholderia mallei (strain NCTC 10247)).